Consider the following 356-residue polypeptide: Deoxyribonuclease-2-beta (356 aa).

The signal sequence occupies residues 1–22 (MTAQPLKAALPLLFVALSGVLG). Residues Asn-77, Asn-98, Asn-114, and Asn-273 are each glycosylated (N-linked (GlcNAc...) asparagine).

It belongs to the DNase II family. Liver specific.

It localises to the lysosome. It carries out the reaction Endonucleolytic cleavage to nucleoside 3'-phosphates and 3'-phosphooligonucleotide end-products.. In terms of biological role, hydrolyzes DNA under acidic conditions. Does not require divalent cations for activity. Participates in the degradation of nuclear DNA during lens cell differentiation. The chain is Deoxyribonuclease-2-beta (Dnase2b) from Rattus norvegicus (Rat).